The primary structure comprises 460 residues: MKNEMWSGRFSGASDELLKEFNASLNVDKTLFNEDIQGSIAHATMLESCGILKKEELDAIIKGLEQVRSEIEQGKFVFDIKDEDIHMAIEKRLSEIIGSEIGGRLHTARSRNDQVATDFKLFVKKSHIELIKLLKELIQTMLKHAKAHKKTIMPSFTHLQHAQPVSFSFYILAYAFMLMRDIKRLQNSLELADFSPLGSCACAGTSYATNRELSAKILGFKDIMSNAMDGVSDRDFALDLLYDIAVIFTHTSRLCEEMILFSSSEFSFITISDSFSTGSSIMPQKKNPDVCELIRGKTGRVYGNLISLLTIMKALPLAYNKDMQEDKEGIFDSVKTAKDSLIILNAMLKEIQINKENMLNACKKGHMLATDLADYLVREKNIPFRKAHFIVGNVVAQAEAQGIDISEIKDLSKIDPVFDEKAMELLNFEFSLNSKQSEGSSSIASVEKQIQILEGFIQNL.

Belongs to the lyase 1 family. Argininosuccinate lyase subfamily.

It is found in the cytoplasm. The enzyme catalyses 2-(N(omega)-L-arginino)succinate = fumarate + L-arginine. It functions in the pathway amino-acid biosynthesis; L-arginine biosynthesis; L-arginine from L-ornithine and carbamoyl phosphate: step 3/3. This Campylobacter jejuni (strain RM1221) protein is Argininosuccinate lyase.